Here is a 302-residue protein sequence, read N- to C-terminus: Sulfate adenylyltransferase subunit 2 (302 aa).

Residues 280-302 (RQGRAIDHDQSGSMELKKRQGYF) are disordered.

This sequence belongs to the PAPS reductase family. CysD subfamily. As to quaternary structure, heterodimer composed of CysD, the smaller subunit, and CysN.

The catalysed reaction is sulfate + ATP + H(+) = adenosine 5'-phosphosulfate + diphosphate. It functions in the pathway sulfur metabolism; hydrogen sulfide biosynthesis; sulfite from sulfate: step 1/3. In terms of biological role, with CysN forms the ATP sulfurylase (ATPS) that catalyzes the adenylation of sulfate producing adenosine 5'-phosphosulfate (APS) and diphosphate, the first enzymatic step in sulfur assimilation pathway. APS synthesis involves the formation of a high-energy phosphoric-sulfuric acid anhydride bond driven by GTP hydrolysis by CysN coupled to ATP hydrolysis by CysD. The sequence is that of Sulfate adenylyltransferase subunit 2 from Vibrio cholerae serotype O1 (strain ATCC 39541 / Classical Ogawa 395 / O395).